The following is a 492-amino-acid chain: Protein adenylyltransferase Fic (492 aa).

Over residues 1–17 the composition is skewed to low complexity; the sequence is MCTEAEQPSPPAQQQEQ. Residues 1-25 are disordered; that stretch reads MCTEAEQPSPPAQQQEQGNPPLCKA. A helical membrane pass occupies residues 33-55; it reads LYRLVLLFVAGSLAAWTFHALSS. TPR repeat units follow at residues 118-151 and 152-186; these read ALGA…APRH and PEVL…SPSN. The Inhibitory (S/T)XXXE(G/N) motif motif lies at 243 to 248; that stretch reads SVGIEG. ATP-binding positions include Glu247 and 328-331; that span reads VGGH. The region spanning 297 to 432 is the Fido domain; sequence ITIKDILELH…IRPFVRFIAD (136 aa). Residue His375 is part of the active site. ATP-binding positions include 379 to 386, 411 to 412, and Asn419; these read DGNGRTSR and YY.

It belongs to the fic family. As to quaternary structure, homodimer.

Its subcellular location is the membrane. The catalysed reaction is L-tyrosyl-[protein] + ATP = O-(5'-adenylyl)-L-tyrosyl-[protein] + diphosphate. It carries out the reaction L-threonyl-[protein] + ATP = 3-O-(5'-adenylyl)-L-threonyl-[protein] + diphosphate. It catalyses the reaction 3-O-(5'-adenylyl)-L-threonyl-[protein] + H2O = L-threonyl-[protein] + AMP + H(+). With respect to regulation, the side chain of Glu-247 determines which of the two opposing activities (AMPylase or de-AMPylase) will take place. In response to endoplasmic reticulum stress, mediates de-AMPylase activity. Adenylyltransferase activity is inhibited by the inhibitory helix present at the N-terminus: Glu-247 binds ATP and competes with ATP-binding at Arg-386, thereby preventing adenylyltransferase activity. In unstressed cells, disengagement of Glu-247 promotes adenylyltransferase activity. Activation dissociates ATP-binding from Glu-247, allowing ordered binding of the entire ATP moiety with the alpha-phosphate in an orientation that is productive for accepting an incoming target hydroxyl side chain. Functionally, protein that can both mediate the addition of adenosine 5'-monophosphate (AMP) to specific residues of target proteins (AMPylation), and the removal of the same modification from target proteins (de-AMPylation), depending on the context. The side chain of Glu-247 determines which of the two opposing activities (AMPylase or de-AMPylase) will take place. Acts as a key regulator of the unfolded protein response (UPR) by mediating AMPylation or de-AMPylation of Hsc70-3/BiP. In unstressed cells, acts as an adenylyltransferase by mediating AMPylation of Hsc70-3/BiP at 'Thr-518', thereby inactivating it. In response to endoplasmic reticulum stress, acts as a phosphodiesterase by mediating removal of ATP (de-AMPylation) from Hsc70-3/BiP at 'Thr-518', leading to restore HSPA5/BiP activity. In Drosophila sechellia (Fruit fly), this protein is Protein adenylyltransferase Fic.